A 248-amino-acid chain; its full sequence is Ribonuclease PH (248 aa).

Residues Arg-86 and Gly-124 to Arg-126 contribute to the phosphate site.

It belongs to the RNase PH family. Homohexameric ring arranged as a trimer of dimers.

The catalysed reaction is tRNA(n+1) + phosphate = tRNA(n) + a ribonucleoside 5'-diphosphate. Phosphorolytic 3'-5' exoribonuclease that plays an important role in tRNA 3'-end maturation. Removes nucleotide residues following the 3'-CCA terminus of tRNAs; can also add nucleotides to the ends of RNA molecules by using nucleoside diphosphates as substrates, but this may not be physiologically important. Probably plays a role in initiation of 16S rRNA degradation (leading to ribosome degradation) during starvation. The chain is Ribonuclease PH from Listeria monocytogenes serotype 4b (strain CLIP80459).